The chain runs to 184 residues: Ribosome-recycling factor (184 aa).

Belongs to the RRF family.

The protein resides in the cytoplasm. Its function is as follows. Responsible for the release of ribosomes from messenger RNA at the termination of protein biosynthesis. May increase the efficiency of translation by recycling ribosomes from one round of translation to another. This chain is Ribosome-recycling factor, found in Lachnoclostridium phytofermentans (strain ATCC 700394 / DSM 18823 / ISDg) (Clostridium phytofermentans).